The chain runs to 308 residues: NAD-dependent protein deacylase SIR4 (308 aa).

The transit peptide at 1–16 directs the protein to the mitochondrion; it reads MAATKLHPALRNAIRA. The 281-residue stretch at 28-308 folds into the Deacetylase sirtuin-type domain; the sequence is TFDVQEGIKL…EVLPAALRQL (281 aa). NAD(+) contacts are provided by residues 53-73 and 129-132; these read GAGISTDSGIPDYRSPGRPPH and QNVD. The active-site Proton acceptor is histidine 147. Zn(2+) is bound by residues cysteine 155, cysteine 158, cysteine 211, and cysteine 214. NAD(+) is bound by residues 251–253, 277–279, and isoleucine 297; these read GTS and NSG.

It belongs to the sirtuin family. Class II subfamily. It depends on Zn(2+) as a cofactor.

It localises to the mitochondrion matrix. The catalysed reaction is N(6)-acetyl-L-lysyl-[protein] + NAD(+) + H2O = 2''-O-acetyl-ADP-D-ribose + nicotinamide + L-lysyl-[protein]. In terms of biological role, NAD-dependent protein deacylase. Catalyzes the NAD-dependent hydrolysis of acyl groups from lysine residues. In Monosiga brevicollis (Choanoflagellate), this protein is NAD-dependent protein deacylase SIR4.